The primary structure comprises 390 residues: NADH-quinone oxidoreductase subunit H (390 aa).

9 helical membrane-spanning segments follow: residues 4–24, 78–98, 120–140, 157–177, 191–211, 247–266, 278–298, 315–337, and 341–360; these read WLLT…ALLT, LVYT…FGGI, VLAL…GGWA, MISY…LVGS, GWMI…SFAE, YVNM…GGWR, IADI…FVFI, FGWK…YIAF, and WGWW…LLAL.

The protein belongs to the complex I subunit 1 family. In terms of assembly, NDH-1 is composed of 15 different subunits. Subunits NuoA, H, J, K, L, M, N constitute the membrane sector of the complex.

The protein localises to the cell membrane. It catalyses the reaction a quinone + NADH + 5 H(+)(in) = a quinol + NAD(+) + 4 H(+)(out). NDH-1 shuttles electrons from NADH, via FMN and iron-sulfur (Fe-S) centers, to quinones in the respiratory chain. The immediate electron acceptor for the enzyme in this species is believed to be ubiquinone. Couples the redox reaction to proton translocation (for every two electrons transferred, four hydrogen ions are translocated across the cytoplasmic membrane), and thus conserves the redox energy in a proton gradient. This subunit may bind ubiquinone. This Deinococcus deserti (strain DSM 17065 / CIP 109153 / LMG 22923 / VCD115) protein is NADH-quinone oxidoreductase subunit H.